Here is a 116-residue protein sequence, read N- to C-terminus: Large ribosomal subunit protein bL19 (116 aa).

Belongs to the bacterial ribosomal protein bL19 family.

In terms of biological role, this protein is located at the 30S-50S ribosomal subunit interface and may play a role in the structure and function of the aminoacyl-tRNA binding site. The sequence is that of Large ribosomal subunit protein bL19 from Mycoplasmopsis agalactiae (strain NCTC 10123 / CIP 59.7 / PG2) (Mycoplasma agalactiae).